The primary structure comprises 156 residues: Small ribosomal subunit protein uS7 (156 aa).

The protein belongs to the universal ribosomal protein uS7 family. In terms of assembly, part of the 30S ribosomal subunit. Contacts proteins S9 and S11.

One of the primary rRNA binding proteins, it binds directly to 16S rRNA where it nucleates assembly of the head domain of the 30S subunit. Is located at the subunit interface close to the decoding center, probably blocks exit of the E-site tRNA. The polypeptide is Small ribosomal subunit protein uS7 (Neisseria gonorrhoeae (strain ATCC 700825 / FA 1090)).